The following is a 23-amino-acid chain: MINQVSVYRQPPVLSGCRQVKTI.

The chain is Protein YqfH from Escherichia coli (strain K12).